The sequence spans 367 residues: Phosphoribosylaminoimidazole-succinocarboxamide synthase (367 aa).

Belongs to the SAICAR synthetase family.

The enzyme catalyses 5-amino-1-(5-phospho-D-ribosyl)imidazole-4-carboxylate + L-aspartate + ATP = (2S)-2-[5-amino-1-(5-phospho-beta-D-ribosyl)imidazole-4-carboxamido]succinate + ADP + phosphate + 2 H(+). Its pathway is purine metabolism; IMP biosynthesis via de novo pathway; 5-amino-1-(5-phospho-D-ribosyl)imidazole-4-carboxamide from 5-amino-1-(5-phospho-D-ribosyl)imidazole-4-carboxylate: step 1/2. This is Phosphoribosylaminoimidazole-succinocarboxamide synthase from Vibrio vulnificus (strain CMCP6).